A 173-amino-acid polypeptide reads, in one-letter code: Ribulose bisphosphate carboxylase small subunit, chloroplastic 5 (173 aa).

The N-terminal 49 residues, 1–49 (MASIPATVATVAQANMVAPFTGLKSNAAFPVTKKVNDFSTLPSNGGRVQ), are a transit peptide targeting the chloroplast.

The protein belongs to the RuBisCO small chain family. As to quaternary structure, heterohexadecamer of 8 large and 8 small subunits.

The protein localises to the plastid. Its subcellular location is the chloroplast. In terms of biological role, ruBisCO catalyzes two reactions: the carboxylation of D-ribulose 1,5-bisphosphate, the primary event in carbon dioxide fixation, as well as the oxidative fragmentation of the pentose substrate. Both reactions occur simultaneously and in competition at the same active site. Although the small subunit is not catalytic it is essential for maximal activity. This is Ribulose bisphosphate carboxylase small subunit, chloroplastic 5 from Flaveria pringlei.